Here is a 452-residue protein sequence, read N- to C-terminus: Sulfide:quinone oxidoreductase, mitochondrial (452 aa).

Residues A54–G55, E77, Q85, and V120 contribute to the FAD site. C204 functions as the Cysteine persulfide intermediate in the catalytic mechanism. C204 and C380 are joined by a disulfide. FAD is bound by residues D337 and K345–A348. Residue C380 is the Cysteine persulfide intermediate of the active site.

This sequence belongs to the SQRD family. FAD serves as cofactor.

The protein resides in the mitochondrion. The enzyme catalyses ubiquinone-10 + hydrogen sulfide + sulfite + 2 H(+) = ubiquinol-10 + thiosulfate. The catalysed reaction is a quinone + hydrogen sulfide + glutathione + H(+) = S-sulfanylglutathione + a quinol. In terms of biological role, catalyzes the oxidation of hydrogen sulfide, with the help of a quinone. The sequence is that of Sulfide:quinone oxidoreductase, mitochondrial from Dictyostelium discoideum (Social amoeba).